A 495-amino-acid polypeptide reads, in one-letter code: Glycerol kinase (495 aa).

Thr-11 contributes to the ADP binding site. Thr-11, Thr-12, and Ser-13 together coordinate ATP. Thr-11 lines the sn-glycerol 3-phosphate pocket. ADP is bound at residue Arg-15. Sn-glycerol 3-phosphate-binding residues include Arg-81, Glu-82, Tyr-133, and Asp-242. Positions 81, 82, 133, 242, and 243 each coordinate glycerol. The ADP site is built by Thr-264 and Gly-307. The ATP site is built by Thr-264, Gly-307, Gln-311, and Gly-408. Gly-408 serves as a coordination point for ADP.

The protein belongs to the FGGY kinase family.

The catalysed reaction is glycerol + ATP = sn-glycerol 3-phosphate + ADP + H(+). It functions in the pathway polyol metabolism; glycerol degradation via glycerol kinase pathway; sn-glycerol 3-phosphate from glycerol: step 1/1. Its activity is regulated as follows. Inhibited by fructose 1,6-bisphosphate (FBP). In terms of biological role, key enzyme in the regulation of glycerol uptake and metabolism. Catalyzes the phosphorylation of glycerol to yield sn-glycerol 3-phosphate. This chain is Glycerol kinase, found in Geobacter sp. (strain M21).